The chain runs to 437 residues: Bile acid CoA-transferase BaiK (437 aa).

Residue Asp-171 is the Nucleophile of the active site.

Belongs to the CoA-transferase III family.

The catalysed reaction is deoxycholoyl-CoA + cholate = choloyl-CoA + deoxycholate. The enzyme catalyses allodeoxycholoyl-CoA + cholate = allodeoxycholate + choloyl-CoA. It catalyses the reaction allocholate + deoxycholoyl-CoA = allocholoyl-CoA + deoxycholate. It carries out the reaction allocholate + allodeoxycholoyl-CoA = allocholoyl-CoA + allodeoxycholate. The catalysed reaction is ursodeoxycholate + deoxycholoyl-CoA = ursodeoxycholoyl-CoA + deoxycholate. The enzyme catalyses allodeoxycholoyl-CoA + ursodeoxycholate = ursodeoxycholoyl-CoA + allodeoxycholate. It functions in the pathway lipid metabolism; bile acid biosynthesis. Its function is as follows. Functions in the bile acid 7alpha-dehydroxylation pathway, which forms secondary bile acids via the 7alpha-dehydroxylation of primary bile acids, and is carried out by intestinal anaerobic bacteria. Acts as a bile acid CoA transferase with broad bile acid substrate specificity. Catalyzes the transfer of the CoA moiety of secondary bile acid-CoA compounds to primary bile acids. Can use deoxycholoyl-CoA and allodeoxycholoyl-CoA as bile acid CoA donors and cholate, allocholate and ursodeoxycholate as bile acid CoA acceptors. Shows no activity when lithocholoyl-CoA is used as the CoA donor. This chain is Bile acid CoA-transferase BaiK, found in Clostridium scindens (strain JCM 10418 / VPI 12708).